The following is a 188-amino-acid chain: MEARFTRGKSALLERALARPRTEVSLSAFALLFSELVQHCQSRVFTVAELQARLAALGRQVGARVLDALVAREKGARRETKVLGALLFVKGAVWKALFGKEADKLEQANDDARTFYIIEREPLINTYISVPKENSTLNCASFTAGIVEAVLTHSGFPAKVTAHWHKGTTLMIKFEEAVIARDRALEGR.

At Ser-10 the chain carries Phosphoserine.

It belongs to the TRAPP small subunits family. BET3 subfamily. As to quaternary structure, component of the multisubunit TRAPP (transport protein particle) complex, which includes at least TRAPPC2, TRAPPC2L, TRAPPC3, TRAPPC3L, TRAPPC4, TRAPPC5, TRAPPC8, TRAPPC9, TRAPPC10, TRAPPC11 and TRAPPC12.

It localises to the golgi apparatus. The protein resides in the cis-Golgi network. Its subcellular location is the endoplasmic reticulum. In terms of biological role, may play a role in vesicular transport from endoplasmic reticulum to Golgi. The protein is Trafficking protein particle complex subunit 5 (TRAPPC5) of Bos taurus (Bovine).